The chain runs to 540 residues: NEDD8-activating enzyme E1 regulatory subunit AXR1 (540 aa).

The protein belongs to the ubiquitin-activating E1 family. ULA1 subfamily. Heterodimer of ECR1 and AXR1. The complex binds to RUB1/NEDD8 and RCE1. Expressed in shoot, root and floral meristems, in vascular tissues of cotyledons and mature leaves, and in the stele of the root. Expressed at higher levels on the lower side of an emerging root during germination and at higher levels on the underside of the apical hook.

It localises to the nucleus. The protein operates within protein modification; protein neddylation. In terms of biological role, regulatory subunit of the dimeric ECR1-AXR1 E1 enzyme. E1 activates RUB1/NEDD8 by first adenylating its C-terminal glycine residue with ATP, thereafter linking this residue to the side chain of the catalytic cysteine, yielding a RUB1-ECR1 thioester and free AMP. E1 finally transfers RUB1 to the catalytic cysteine of RCE1. Plays an important role in auxin response. Regulates the chromosomal localization of meiotic recombination by crossovers (COs) and subsequent synapsis, probably through the activation of a CRL4 complex. Required for E3-mediated protein degradation in response to auxin, jasmonic acid and cold stress. Required for the COP1-COP10-CSN-mediated repression of photomorphogenesis in the dark. May function redundantly with AXL1 in the RUB conjugating pathway. Seems not to be functionally equivalent to AXL1 in vivo. The polypeptide is NEDD8-activating enzyme E1 regulatory subunit AXR1 (Arabidopsis thaliana (Mouse-ear cress)).